A 278-amino-acid polypeptide reads, in one-letter code: Urease accessory protein UreD 1 (278 aa).

This sequence belongs to the UreD family. UreD, UreF and UreG form a complex that acts as a GTP-hydrolysis-dependent molecular chaperone, activating the urease apoprotein by helping to assemble the nickel containing metallocenter of UreC. The UreE protein probably delivers the nickel.

The protein localises to the cytoplasm. Functionally, required for maturation of urease via the functional incorporation of the urease nickel metallocenter. In Bradyrhizobium sp. (strain ORS 278), this protein is Urease accessory protein UreD 1.